A 96-amino-acid polypeptide reads, in one-letter code: Large ribosomal subunit protein eL43 (96 aa).

The C4-type zinc finger occupies 41 to 62; the sequence is CPVCAFPKLKRAGTSIWVCDKC.

It belongs to the eukaryotic ribosomal protein eL43 family. Requires Zn(2+) as cofactor.

In Methanococcus vannielii (strain ATCC 35089 / DSM 1224 / JCM 13029 / OCM 148 / SB), this protein is Large ribosomal subunit protein eL43.